The sequence spans 261 residues: ClpXP adapter protein SpxH (261 aa).

The protein belongs to the SpxH family. As to quaternary structure, interacts with Spx.

Its subcellular location is the cytoplasm. Functionally, adapter protein required for efficient degradation of Spx by ClpXP under non-stress conditions. Interaction with Spx stabilizes Spx and exposes the C-terminus of Spx for recognition and proteolysis by ClpXP. The sequence is that of ClpXP adapter protein SpxH from Staphylococcus aureus.